The primary structure comprises 357 residues: MRLLQKFTRKSSLKQSGSSSNYAYVTARVRAMKSNLLPREVYPRLMNMGIDEITRFIEESQYKQDVDELARTYDGVDLFEHALNRNLAVTFTKLINISEGELNYLISEYLRKYDIWSIKTILRGKYCGASVEEINDSIVSAGQLSYPFLLSLSEKESYESIIDALSGTDYYPTLKEYDGTNLSDIENKLDKMYYTGLSTTVNNPKSNDSKLFSKFIRTEIDIKNLSTLFRLKNAGVEKDEIADLILEGGLHLSIKEIEKLLPLPFSEFVQSLEKYPYWEDISGIVKTEMDSLIELETQLTRSNIKSASSFSHVYPLSIVPIMDYILNKTNEVHNLRIILRGKAANLDEEIIRNQLVI.

It belongs to the V-ATPase V0D/AC39 subunit family. In terms of assembly, has multiple subunits with at least A(3), B(3), C, D, E, F, H, I and proteolipid K(x).

Its subcellular location is the cell membrane. In terms of biological role, component of the A-type ATP synthase that produces ATP from ADP in the presence of a proton gradient across the membrane. This Methanococcoides burtonii (strain DSM 6242 / NBRC 107633 / OCM 468 / ACE-M) protein is A-type ATP synthase subunit C.